The sequence spans 253 residues: PAXIP1-associated glutamate-rich protein 1 (253 aa).

Disordered regions lie at residues 1 to 109 (MSLV…MPPP) and 128 to 253 (QAEI…QRKY). A compositionally biased stretch (basic and acidic residues) spans 51–62 (EGGREEAEHEGS). A sufficient for interaction with NCOA1 region spans residues 116–160 (YELLAAHGTLELQAEILPRRPPTPEAQSEEERSDEEPEAKEEEEE). At Thr-138 the chain carries Phosphothreonine. The segment covering 142 to 159 (QSEEERSDEEPEAKEEEE) has biased composition (acidic residues). 2 positions are modified to phosphoserine: Ser-143 and Ser-148. A sufficient for interaction with ESR1 region spans residues 161–253 (KPHMPTEFDF…GSLFPRQRKY (93 aa)). The span at 195 to 223 (QKREARLDKVLSDMKRHKKLEEQILRTGR) shows a compositional bias: basic and acidic residues. Position 237 is a phosphoserine (Ser-237).

As to quaternary structure, component of the KMT2 family MLL2/MLL3 complex, at least composed of the histone methyltransferases KMT2D and/or KMT2C, the common complex subunits ASH2L, RBBP5, WDR5 and DPY30, and the complex type-specific subunits PAXIP1/PTIP, PAGR1, NCOA6 and KDM6A; PAXIP1 is required for the association with the MLL2/MLL3 complex. Forms a constitutive complex with PAXIP1/PTIP independently of the MLL2/MLL3 complex. Interacts with NCOA1, ESR1, NR3C1, AR.

It is found in the nucleus. Functionally, its association with the histone methyltransferase MLL2/MLL3 complex is suggesting a role in epigenetic transcriptional activation. However, in association with PAXIP1/PTIP is proposed to function at least in part independently of the MLL2/MLL3 complex. Proposed to be recruited by PAXIP1 to sites of DNA damage where the PAGR1:PAXIP1 complex is required for cell survival in response to DNA damage independently of the MLL2/MLL3 complex. However, its function in DNA damage has been questioned. During immunoglobulin class switching in activated B-cells is involved in transcription regulation of downstream switch regions at the immunoglobulin heavy-chain (Igh) locus independently of the MLL2/MLL3 complex. Involved in both estrogen receptor-regulated gene transcription and estrogen-stimulated G1/S cell-cycle transition. Acts as a transcriptional cofactor for nuclear hormone receptors. Inhibits the induction properties of several steroid receptors such as NR3C1, AR and PPARG; the mechanism of inhibition appears to be gene-dependent. This is PAXIP1-associated glutamate-rich protein 1 (PAGR1) from Bos taurus (Bovine).